Reading from the N-terminus, the 620-residue chain is Threonine--tRNA ligase (620 aa).

Residues 1–141 form an editing domain region; the sequence is MKMLLIHSDY…LSRKIVAKEE (141 aa). A catalytic region spans residues 197 to 496; sequence PHVKFIKEKD…AEKGNAPMLP (300 aa). Zn(2+)-binding residues include Cys-289, His-341, and His-465.

Belongs to the class-II aminoacyl-tRNA synthetase family. As to quaternary structure, homodimer. Zn(2+) serves as cofactor.

The protein localises to the cytoplasm. The enzyme catalyses tRNA(Thr) + L-threonine + ATP = L-threonyl-tRNA(Thr) + AMP + diphosphate + H(+). Not inhibited by 1 uM borrelidin (BN); probably does not bind BN. In terms of biological role, catalyzes the attachment of threonine to tRNA(Thr) in a two-step reaction: L-threonine is first activated by ATP to form Thr-AMP and then transferred to the acceptor end of tRNA(Thr). Also activates L-serine, but does not detectably transfer it to tRNA(Thr). Edits incorrectly charged L-seryl-tRNA(Thr) via its editing domain. Has no activity on correctly acylated L-seryl-tRNA(Ser) or L-threonyl-tRNA(Thr). Deacylates correctly charged glycyl-tRNA(Gly), but not glycyl-tRNA(Gly)(2'-dA76) (the terminal 2'-OH of tRNA adenine 76 has been dehydroxylated) nor the 2'-fluoro tRNA derivative, strongly suggesting the editing function is tRNA catalyzed. The protein is Threonine--tRNA ligase of Methanocaldococcus jannaschii (strain ATCC 43067 / DSM 2661 / JAL-1 / JCM 10045 / NBRC 100440) (Methanococcus jannaschii).